The primary structure comprises 491 residues: Probable cytosol aminopeptidase (491 aa).

Residues Lys-260 and Asp-265 each coordinate Mn(2+). Residue Lys-272 is part of the active site. The Mn(2+) site is built by Asp-284, Asp-343, and Glu-345. The active site involves Arg-347.

The protein belongs to the peptidase M17 family. Requires Mn(2+) as cofactor.

The protein resides in the cytoplasm. It carries out the reaction Release of an N-terminal amino acid, Xaa-|-Yaa-, in which Xaa is preferably Leu, but may be other amino acids including Pro although not Arg or Lys, and Yaa may be Pro. Amino acid amides and methyl esters are also readily hydrolyzed, but rates on arylamides are exceedingly low.. The enzyme catalyses Release of an N-terminal amino acid, preferentially leucine, but not glutamic or aspartic acids.. Presumably involved in the processing and regular turnover of intracellular proteins. Catalyzes the removal of unsubstituted N-terminal amino acids from various peptides. This Rippkaea orientalis (strain PCC 8801 / RF-1) (Cyanothece sp. (strain PCC 8801)) protein is Probable cytosol aminopeptidase.